The sequence spans 272 residues: HMP-PP phosphatase (272 aa).

The Nucleophile role is filled by Asp-8. Residues Asp-8, Asp-10, and Asp-212 each coordinate Mg(2+).

Belongs to the HAD-like hydrolase superfamily. Cof family. Requires Mg(2+) as cofactor.

The enzyme catalyses 4-amino-2-methyl-5-(diphosphooxymethyl)pyrimidine + H2O = 4-amino-2-methyl-5-(phosphooxymethyl)pyrimidine + phosphate + H(+). Its function is as follows. Catalyzes the hydrolysis of 4-amino-2-methyl-5-hydroxymethylpyrimidine pyrophosphate (HMP-PP) to 4-amino-2-methyl-5-hydroxymethylpyrimidine phosphate (HMP-P). The chain is HMP-PP phosphatase from Salmonella enteritidis PT4 (strain P125109).